A 247-amino-acid chain; its full sequence is Proteasome subunit alpha (247 aa).

It belongs to the peptidase T1A family. In terms of assembly, the 20S proteasome core is composed of 14 alpha and 14 beta subunits that assemble into four stacked heptameric rings, resulting in a barrel-shaped structure. The two inner rings, each composed of seven catalytic beta subunits, are sandwiched by two outer rings, each composed of seven alpha subunits. The catalytic chamber with the active sites is on the inside of the barrel. Has a gated structure, the ends of the cylinder being occluded by the N-termini of the alpha-subunits. Is capped at one or both ends by the proteasome regulatory ATPase, PAN.

It localises to the cytoplasm. Its activity is regulated as follows. The formation of the proteasomal ATPase PAN-20S proteasome complex, via the docking of the C-termini of PAN into the intersubunit pockets in the alpha-rings, triggers opening of the gate for substrate entry. Interconversion between the open-gate and close-gate conformations leads to a dynamic regulation of the 20S proteasome proteolysis activity. Functionally, component of the proteasome core, a large protease complex with broad specificity involved in protein degradation. The protein is Proteasome subunit alpha of Methanosarcina acetivorans (strain ATCC 35395 / DSM 2834 / JCM 12185 / C2A).